A 1097-amino-acid polypeptide reads, in one-letter code: DNA-directed RNA polymerase subunit beta (1097 aa).

Residues 1072 to 1097 (QDVNPRRSTPSRPTYESLGVADYDED) form a disordered region.

The protein belongs to the RNA polymerase beta chain family. In cyanobacteria the RNAP catalytic core is composed of 2 alpha, 1 beta, 1 beta', 1 gamma and 1 omega subunit. When a sigma factor is associated with the core the holoenzyme is formed, which can initiate transcription.

It carries out the reaction RNA(n) + a ribonucleoside 5'-triphosphate = RNA(n+1) + diphosphate. Its function is as follows. DNA-dependent RNA polymerase catalyzes the transcription of DNA into RNA using the four ribonucleoside triphosphates as substrates. This is DNA-directed RNA polymerase subunit beta from Synechococcus sp. (strain CC9902).